Reading from the N-terminus, the 182-residue chain is RNA chaperone ProQ (182 aa).

Residues 125-160 (EQRKEQRKDFFKKKAREERNAKTMNKAVKKGSPKKD) are disordered.

It belongs to the ProQ family.

It localises to the cytoplasm. In terms of biological role, RNA chaperone with significant RNA binding, RNA strand exchange and RNA duplexing activities. This Haemophilus ducreyi (strain 35000HP / ATCC 700724) protein is RNA chaperone ProQ.